The sequence spans 106 residues: ATP-dependent Clp protease adapter protein ClpS (106 aa).

It belongs to the ClpS family. In terms of assembly, binds to the N-terminal domain of the chaperone ClpA.

In terms of biological role, involved in the modulation of the specificity of the ClpAP-mediated ATP-dependent protein degradation. In Sodalis glossinidius (strain morsitans), this protein is ATP-dependent Clp protease adapter protein ClpS.